A 224-amino-acid chain; its full sequence is Deoxyribose-phosphate aldolase (224 aa).

Asp92 acts as the Proton donor/acceptor in catalysis. Lys155 acts as the Schiff-base intermediate with acetaldehyde in catalysis. Lys184 functions as the Proton donor/acceptor in the catalytic mechanism.

Belongs to the DeoC/FbaB aldolase family. DeoC type 1 subfamily.

It is found in the cytoplasm. It catalyses the reaction 2-deoxy-D-ribose 5-phosphate = D-glyceraldehyde 3-phosphate + acetaldehyde. Its pathway is carbohydrate degradation; 2-deoxy-D-ribose 1-phosphate degradation; D-glyceraldehyde 3-phosphate and acetaldehyde from 2-deoxy-alpha-D-ribose 1-phosphate: step 2/2. In terms of biological role, catalyzes a reversible aldol reaction between acetaldehyde and D-glyceraldehyde 3-phosphate to generate 2-deoxy-D-ribose 5-phosphate. The chain is Deoxyribose-phosphate aldolase from Shouchella clausii (strain KSM-K16) (Alkalihalobacillus clausii).